The sequence spans 962 residues: Leucine--tRNA ligase (962 aa).

Residues 40 to 51 carry the 'HIGH' region motif; the sequence is PYPSGAGLHVGH. The 'KMSKS' region signature appears at 737–741; the sequence is KMSKS. Position 740 (K740) interacts with ATP.

It belongs to the class-I aminoacyl-tRNA synthetase family.

The protein resides in the cytoplasm. The enzyme catalyses tRNA(Leu) + L-leucine + ATP = L-leucyl-tRNA(Leu) + AMP + diphosphate. The polypeptide is Leucine--tRNA ligase (Flavobacterium psychrophilum (strain ATCC 49511 / DSM 21280 / CIP 103535 / JIP02/86)).